The sequence spans 861 residues: ToMV resistance protein Tm-2(2) (861 aa).

Residues 63 to 83 (VKNLLKDIQELAGDVEDLLDD) are a coiled coil. Residues 162 to 388 (DDFNMLQAKL…LESMGHKVQD (227 aa)) enclose the NB-ARC domain. An ATP-binding site is contributed by 185–192 (GMPGLGKT). LRR repeat units lie at residues 225–248 (LDIA…NLRS), 305–327 (LHAL…IFNF), 388–411 (DGCA…CFLY), 449–472 (LAED…TYNG), 510–536 (VARL…KLEK), 585–608 (MTCL…IVKL), 609–631 (TRLE…VWES), 652–680 (ISSF…FFEP), 689–710 (LRKL…IFSP), 712–735 (LKAL…LSSY), 736–758 (PHIA…SFPP), 784–810 (LRKL…GYSF), and 811–835 (PQLE…DVSM).

Belongs to the disease resistance NB-LRR family. In terms of assembly, (Microbial infection) Interacts with tobamoviruses mouvement protein (e.g. tobacco mosaic virus (TMV) MP, AC P03583) at the plasma membrane; this interaction triggers defense responses leading to programmed cell death. Binds to HSP90 proteins (e.g. HSP90-1 and Nicotiana benthamiana HSP90-1); this interaction seems required for defense responses toward tobamoviruses.

The protein resides in the cell membrane. Its function is as follows. Inhibitor of viral mouvements which confers resistance to some tobamoviruses including tomato mosaic virus (ToMV) (e.g. strains L, B7 and ToMV1-2) and tobacco mosaic virus (TMV), but not to resistance-breaking isolates (e.g. LIIA and ToMV2(2)) ToMV and tomato brown rugose fruit virus (ToBRFV). Elicits a hypersensitive reaction in response to avirulent (Avr) movement proteins from resistance inducing tobamoviruses (e.g. ToMV and TMV) strains, thus leading to programmed cell death; this local extreme resistance requires rbcS. The polypeptide is ToMV resistance protein Tm-2(2) (Solanum lycopersicum (Tomato)).